Here is a 310-residue protein sequence, read N- to C-terminus: Pantothenate kinase (310 aa).

95–102 contacts ATP; the sequence is GSVAVGKS.

The protein belongs to the prokaryotic pantothenate kinase family.

The protein resides in the cytoplasm. It carries out the reaction (R)-pantothenate + ATP = (R)-4'-phosphopantothenate + ADP + H(+). It participates in cofactor biosynthesis; coenzyme A biosynthesis; CoA from (R)-pantothenate: step 1/5. The protein is Pantothenate kinase of Rhodococcus jostii (strain RHA1).